We begin with the raw amino-acid sequence, 394 residues long: Ribulose bisphosphate carboxylase large chain (394 aa).

Lys5 is subject to N6,N6,N6-trimethyllysine. Substrate-binding residues include Asn114 and Thr164. The active-site Proton acceptor is the Lys166. Lys168 is a substrate binding site. Mg(2+)-binding residues include Lys192, Asp194, and Glu195. Lys192 is modified (N6-carboxylysine). Residue His285 is the Proton acceptor of the active site. The substrate site is built by Arg286, His318, and Ser370.

This sequence belongs to the RuBisCO large chain family. Type I subfamily. As to quaternary structure, heterohexadecamer of 8 large chains and 8 small chains. Mg(2+) is required as a cofactor.

Its subcellular location is the plastid. It is found in the chloroplast. The enzyme catalyses 2 (2R)-3-phosphoglycerate + 2 H(+) = D-ribulose 1,5-bisphosphate + CO2 + H2O. It carries out the reaction D-ribulose 1,5-bisphosphate + O2 = 2-phosphoglycolate + (2R)-3-phosphoglycerate + 2 H(+). Its function is as follows. RuBisCO catalyzes two reactions: the carboxylation of D-ribulose 1,5-bisphosphate, the primary event in carbon dioxide fixation, as well as the oxidative fragmentation of the pentose substrate in the photorespiration process. Both reactions occur simultaneously and in competition at the same active site. The polypeptide is Ribulose bisphosphate carboxylase large chain (rbcL) (Barclaya longifolia (Orchid lily)).